A 142-amino-acid polypeptide reads, in one-letter code: Transcriptional regulator MraZ (142 aa).

SpoVT-AbrB domains are found at residues 5 to 51 (ASAL…PRPE) and 77 to 120 (AADV…DAAT).

It belongs to the MraZ family. As to quaternary structure, forms oligomers.

The protein resides in the cytoplasm. Its subcellular location is the nucleoid. In Cupriavidus taiwanensis (strain DSM 17343 / BCRC 17206 / CCUG 44338 / CIP 107171 / LMG 19424 / R1) (Ralstonia taiwanensis (strain LMG 19424)), this protein is Transcriptional regulator MraZ.